Consider the following 211-residue polypeptide: Eukaryotic translation initiation factor 4E (211 aa).

The protein belongs to the eukaryotic initiation factor 4E family. EIF4F is a multi-subunit complex, the composition of which varies with external and internal environmental conditions. It is composed of at least eIF4A, eIF4E and eIF4G. eIF4E is also known to interact with other partners.

In terms of biological role, recognizes and binds the 7-methylguanosine-containing mRNA cap during an early step in the initiation of protein synthesis and facilitates ribosome binding by inducing the unwinding of the mRNAs secondary structures. The polypeptide is Eukaryotic translation initiation factor 4E (TIF45) (Eremothecium gossypii (strain ATCC 10895 / CBS 109.51 / FGSC 9923 / NRRL Y-1056) (Yeast)).